A 237-amino-acid polypeptide reads, in one-letter code: dTDP-3-amino-3,4,6-trideoxy-alpha-D-glucopyranose N,N-dimethyltransferase (237 aa).

Residues Y14 and R17 each contribute to the substrate site. Residues Y21, A46, E67, 89-90 (DM), and M105 each bind S-adenosyl-L-methionine. Substrate is bound by residues 145–147 (TFA), S152, 165–169 (RVSHS), and R229.

Belongs to the methyltransferase TylM1/DesVI family. In terms of assembly, homodimer.

The catalysed reaction is dTDP-3-amino-3,4,6-trideoxy-alpha-D-glucose + 2 S-adenosyl-L-methionine = dTDP-alpha-D-desosamine + 2 S-adenosyl-L-homocysteine + 2 H(+). Its pathway is antibiotic biosynthesis. In terms of biological role, S-adenosyl-L-methionine-dependent methyltransferase involved in the biosynthesis of desosamine, found in certain macrolide antibiotics such as erthyromycin, azithromycin, clarithromycin, and methymycin. Catalyzes the last step in the biosynthesis of dTDP-desosamine, i.e. the N,N-dimethylation of the 3-amino group of dTDP-3-amino-3,4,6-trideoxy-alpha-D-glucose. The chain is dTDP-3-amino-3,4,6-trideoxy-alpha-D-glucopyranose N,N-dimethyltransferase from Streptomyces venezuelae.